We begin with the raw amino-acid sequence, 528 residues long: Xylose import ATP-binding protein XylG (528 aa).

ABC transporter domains follow at residues 6–245 and 262–507; these read LQMN…VGRE and FEAR…LSHP. An ATP-binding site is contributed by 38–45; that stretch reads GENGAGKS. The disordered stretch occupies residues 504 to 528; it reads LSHPGDPDSNDPANNNHNDNDRKTT.

It belongs to the ABC transporter superfamily. Xylose importer (TC 3.A.1.2.4) family. In terms of assembly, the complex is composed of two ATP-binding proteins (XylG), two transmembrane proteins (XylH) and a solute-binding protein (XylF).

It is found in the cell inner membrane. The enzyme catalyses D-xylose(out) + ATP + H2O = D-xylose(in) + ADP + phosphate + H(+). Its function is as follows. Part of the ABC transporter complex XylFGH involved in xylose import. Responsible for energy coupling to the transport system. The polypeptide is Xylose import ATP-binding protein XylG (Pseudomonas syringae pv. tomato (strain ATCC BAA-871 / DC3000)).